The sequence spans 158 residues: MAYFSTATSLLLLVLSVSSPYVHGASDCDTLVITLFPCLPFISIGGTADTPTASCCSSLKNILDTKPICLCEGLKKAPLGIKLNVTKSATLPVACKLNAPPVSACDSLPPASPPTANGQAPVWGSGWAPAPSPSKGNSLIPISGFSFVIVTALAMFRI.

The first 24 residues, 1-24 (MAYFSTATSLLLLVLSVSSPYVHG), serve as a signal peptide directing secretion. Cystine bridges form between cysteine 28-cysteine 71, cysteine 38-cysteine 55, cysteine 56-cysteine 95, and cysteine 69-cysteine 105. A glycan (N-linked (GlcNAc...) asparagine) is linked at asparagine 84. A lipid anchor (GPI-anchor amidated serine) is attached at serine 134. A propeptide spans 135-158 (KGNSLIPISGFSFVIVTALAMFRI) (removed in mature form).

It belongs to the plant LTP family. In terms of tissue distribution, confined to the ovaries of the inflorescence.

The protein localises to the secreted. Its subcellular location is the cell membrane. Its function is as follows. Probable lipid transfer protein. The sequence is that of Non-specific lipid transfer protein GPI-anchored 29 from Arabidopsis thaliana (Mouse-ear cress).